The primary structure comprises 957 residues: MLTEASLSIWGWGSLGIVLFLITFGPFVIFYLAFYILCFVGGGLVVTLLYGKTNSEKYLEQCEHSFLPPTSSGVPKCLEEMKREARTIKIDRRLTGANIIDEPLQQVIQFSLRDYVQYWYYTLSDDESFLLEIRQTLQNALIQFATRSKEIDWQPYFTTRIVDDFGTHLRVFRKAQQRVTEKDDQVKGTAEDLVETFFEVEVEMEKDVCRDLVCTSPKDEEGFLRDLCEVLLYLLLPPGDFQSKIMRYFVREILARGILLPLINQLSDPDYINQYVIWMIRDSNCNYEAFMNIIKLSDNIGELEAVRDKAAEELQYLRSLDTAGDDINTIKNQINSLLFVKKVCDSRIQRLQSGKEINTVKLAANFGKLCTVPLDSILVDNVALQFFMDYMQQTGGQAHLFFWMTVEGYRVTAQQQLEVLSGRQRDGKQQTNQTKGLLRAAAVGIYEQYLSEKASPRVTVDDYLVAKLADTLNHEDPTPEIFDDIQRKVYELMLRDERFYPSFRQNALYVRMLAELDMLKDPSFRGSDDGDGESFNGSPTGSINLSLDDLSSVTSDDSVQLHAYISDTGVCNDHGKTYALYAITVHRRNLNTEEMWKTYRRYSDFHDFHMRITEQFENLSSILKLPGKKTFNNMDRDFLEKRKKDLNAYLQLLLTPEMMKASPALAHCVYDFLENKAYSKGKGDFARKMDTFVNPLRNSMRNVSNAVKSLPDSLAEGVTKMSDNVGRMSERLGQDIKQSFFKVPPLITKTDSDPEHCRVSAQLDDNVDDNIPLRVMLLLMDEVFDLKERNQWLRRNIKNLLQQLIRATYGDTINRKIVDHVDWMTSPEQVADSVKRFRDAFWPNGILAETVPCRDKAIRMRTRIAGKTKLFAIMPDELKHIIGAETTRKGILRVFEMFQHNQLNRRMVYVFLEGFLETLFPQYKFRELFNKLHSRSKQMQKYKQKLQSTQAPSLQKR.

The PXA domain occupies 97-284; sequence ANIIDEPLQQ…YVIWMIRDSN (188 aa). An RGS domain is found at 373–511; that stretch reads PLDSILVDNV…SFRQNALYVR (139 aa). Positions 559–680 constitute a PX domain; that stretch reads VQLHAYISDT…DFLENKAYSK (122 aa). Positions 601, 603, 628, and 642 each coordinate a 1,2-diacyl-sn-glycero-3-phospho-(1D-myo-inositol-3-phosphate).

This sequence belongs to the sorting nexin family.

It is found in the early endosome membrane. In terms of biological role, may be involved in several stages of intracellular trafficking. Acts as a GAP for Galphas. May play a role in endosome homeostasis. In Mus musculus (Mouse), this protein is Sorting nexin-13 (Snx13).